The sequence spans 605 residues: Probable potassium transport system protein Kup 3 (605 aa).

12 helical membrane passes run Ala16–Phe36, Ile49–Ala69, Val97–Ile117, Gly138–Val158, Phe170–Phe190, Gly212–Leu232, Ala247–Ile267, Leu287–Ile307, Ile339–Phe359, Ala368–Phe388, Ala397–Lys417, and Leu418–Ile438.

Belongs to the HAK/KUP transporter (TC 2.A.72) family.

Its subcellular location is the cell inner membrane. The catalysed reaction is K(+)(in) + H(+)(in) = K(+)(out) + H(+)(out). Its function is as follows. Transport of potassium into the cell. Likely operates as a K(+):H(+) symporter. In Geobacter sulfurreducens (strain ATCC 51573 / DSM 12127 / PCA), this protein is Probable potassium transport system protein Kup 3.